A 1542-amino-acid chain; its full sequence is ABC multidrug transporter AFR1 (1542 aa).

2 disordered regions span residues 1-84 (MSAA…LPAD) and 118-141 (SQQS…FSRK). Over residues 18-41 (TATTQNPSGLANSQVTSDPVPSAT) the composition is skewed to polar residues. The segment covering 60 to 69 (DKSVDAEKVE) has biased composition (basic and acidic residues). Asn-207 and Asn-397 each carry an N-linked (GlcNAc...) asparagine glycan. The 253-residue stretch at 221–473 (LKVLGIFGVN…MIGLGYRDLP (253 aa)) folds into the ABC transporter 1 domain. 5 helical membrane passes run 584–604 (FGIS…GSVY), 618–638 (GGLL…ELPS), 669–689 (VPYN…MGGL), 694–714 (GAFF…SAFF), and 726–746 (VAAR…GYMI). Residue Asn-822 is glycosylated (N-linked (GlcNAc...) asparagine). The helical transmembrane segment at 844-864 (FGILVGFFAFFMFLQMMFIEY) threads the bilayer. The ABC transporter 2 domain maps to 917–1159 (FTWEGLNYTV…VLIDYLERNG (243 aa)). Residue Asn-923 is glycosylated (N-linked (GlcNAc...) asparagine). 953 to 960 (GASGAGKT) is a binding site for ATP. Helical transmembrane passes span 1253 to 1273 (WTRL…FLQL), 1284 to 1304 (VFAI…IEPQ), 1335 to 1355 (MPYS…GVGF), 1365 to 1385 (FFLM…AVAA), 1390 to 1410 (ILIA…FCGV), and 1516 to 1536 (FGIF…AARF).

Belongs to the ABC transporter superfamily. ABCG family. PDR (TC 3.A.1.205) subfamily.

It is found in the cell membrane. It catalyses the reaction itraconazole(in) + ATP + H2O = itraconazole(out) + ADP + phosphate + H(+). The catalysed reaction is voriconazole(in) + ATP + H2O = voriconazole(out) + ADP + phosphate + H(+). The enzyme catalyses fluconazole(in) + ATP + H2O = fluconazole(out) + ADP + phosphate + H(+). Major pleiotropic ABC efflux transporter that confers resistance to structurally and functionally unrelated compounds including azoles such as fluconazole (FLC), itraconazole (ITC), posaconazole (POS), and voriconazole (VRC). Is also able to efflux the eukaryote protein synthesis inhibitor cycloheximide (CHX). In Cryptococcus deuterogattii (strain R265) (Cryptococcus gattii VGII (strain R265)), this protein is ABC multidrug transporter AFR1.